The chain runs to 192 residues: Thymidylate kinase (192 aa).

7-14 (GIDCVGKS) lines the ATP pocket.

It belongs to the thymidylate kinase family.

The enzyme catalyses dTMP + ATP = dTDP + ADP. In terms of biological role, phosphorylation of dTMP to form dTDP in both de novo and salvage pathways of dTTP synthesis. The polypeptide is Thymidylate kinase (Campylobacter jejuni subsp. jejuni serotype O:6 (strain 81116 / NCTC 11828)).